The primary structure comprises 421 residues: F-box protein At2g17690 (421 aa).

The region spanning 2–50 is the F-box domain; that stretch reads GDWSKLPEELLGLIALRLYSVIELIRFRSICKSWRSSASGVNKNHSLSS.

Functionally, involved in heat stress response. Contributes to recovery from heat stress. This chain is F-box protein At2g17690, found in Arabidopsis thaliana (Mouse-ear cress).